Consider the following 240-residue polypeptide: Uridylate kinase (240 aa).

ATP is bound at residue 13–16; the sequence is KASG. Residues 21 to 26 form an involved in allosteric activation by GTP region; sequence GAQGFG. Residue glycine 55 coordinates UMP. ATP-binding residues include glycine 56 and arginine 60. UMP contacts are provided by residues aspartate 75 and 136–143; that span reads TGNPFFTT. Positions 163, 164, 169, and 172 each coordinate ATP.

This sequence belongs to the UMP kinase family. As to quaternary structure, homohexamer.

The protein localises to the cytoplasm. The catalysed reaction is UMP + ATP = UDP + ADP. Its pathway is pyrimidine metabolism; CTP biosynthesis via de novo pathway; UDP from UMP (UMPK route): step 1/1. Allosterically activated by GTP. Inhibited by UTP. In terms of biological role, catalyzes the reversible phosphorylation of UMP to UDP. The protein is Uridylate kinase of Rhizobium etli (strain ATCC 51251 / DSM 11541 / JCM 21823 / NBRC 15573 / CFN 42).